The primary structure comprises 388 residues: Serpin B11 (388 aa).

An RCL region spans residues 338–362 (EEGTEAAAATGESISVKRLPVTVQF).

This sequence belongs to the serpin family. Ov-serpin subfamily. In terms of tissue distribution, expressed in eye, lung, lymphocytes, thymus, stomach, uterus, heart, brain, liver, skeletal muscle, and in day 7, 15, and 17 embryos.

Its subcellular location is the cytoplasm. Inhibitor of serine proteases. Has moderate inhibitory activity for trypsin-like peptidases, but also some activity with cysteine peptidases, cathepsin L, K, and V, and the serine peptidase, tryptase gamma. The sequence is that of Serpin B11 (Serpinb11) from Mus musculus (Mouse).